The chain runs to 250 residues: Ino eighty subunit 3 (250 aa).

Positions 29–70 (PDFLEKDPHHKKFHNADGLNQQGSSTPSTATDANAASTASTH) are disordered. Residues 52 to 70 (SSTPSTATDANAASTASTH) show a composition bias toward low complexity. A phosphoserine mark is found at Ser157 and Ser211.

Component of the chromatin-remodeling INO80 complex, at least composed of ARP4, ARP5, ARP8, RVB1, RVB2, TAF14, NHP10, IES1, IES3, IES4, IES6, ACT1, IES2, IES5 and INO80.

The protein resides in the nucleus. Its function is as follows. Probably involved in transcription regulation via its interaction with the INO80 complex, a chromatin-remodeling complex. The sequence is that of Ino eighty subunit 3 (IES3) from Saccharomyces cerevisiae (strain ATCC 204508 / S288c) (Baker's yeast).